The chain runs to 275 residues: Vitamin B12-binding protein (275 aa).

A signal peptide spans 1–27; sequence MKWIKSTGSIGLSLLLFLSSFSHSLYA. The region spanning 31–275 is the Fe/B12 periplasmic-binding domain; it reads RVISLSPSTT…LCQQLNDNGS (245 aa). Tyr-58 provides a ligand contact to cyanocob(III)alamin. A disulfide bond links Cys-191 and Cys-267.

It belongs to the BtuF family. The complex is composed of two ATP-binding proteins (BtuD), two transmembrane proteins (BtuC) and a solute-binding protein (BtuF).

The protein localises to the periplasm. Functionally, part of the ABC transporter complex BtuCDF involved in vitamin B12 import. Binds vitamin B12 and delivers it to the periplasmic surface of BtuC. The chain is Vitamin B12-binding protein from Photorhabdus laumondii subsp. laumondii (strain DSM 15139 / CIP 105565 / TT01) (Photorhabdus luminescens subsp. laumondii).